Here is a 260-residue protein sequence, read N- to C-terminus: Global transcriptional regulator CodY (260 aa).

The GAF domain stretch occupies residues 1-159 (MPNLLEKTRK…SSTVVGIQLL (159 aa)). The H-T-H motif DNA-binding region spans 207 to 226 (ASVIADRIGITRSVIVNALR).

This sequence belongs to the CodY family.

It localises to the cytoplasm. Functionally, DNA-binding global transcriptional regulator which is involved in the adaptive response to starvation and acts by directly or indirectly controlling the expression of numerous genes in response to nutrient availability. During rapid exponential growth, CodY is highly active and represses genes whose products allow adaptation to nutrient depletion. The sequence is that of Global transcriptional regulator CodY from Streptococcus equi subsp. zooepidemicus (strain H70).